A 340-amino-acid polypeptide reads, in one-letter code: Uroporphyrinogen decarboxylase (340 aa).

Residues 21–25 (RQAGR), Asp71, Tyr148, Ser203, and His316 each bind substrate.

It belongs to the uroporphyrinogen decarboxylase family. In terms of assembly, homodimer.

The protein resides in the cytoplasm. It carries out the reaction uroporphyrinogen III + 4 H(+) = coproporphyrinogen III + 4 CO2. It participates in porphyrin-containing compound metabolism; protoporphyrin-IX biosynthesis; coproporphyrinogen-III from 5-aminolevulinate: step 4/4. Its function is as follows. Catalyzes the decarboxylation of four acetate groups of uroporphyrinogen-III to yield coproporphyrinogen-III. In Campylobacter jejuni (strain RM1221), this protein is Uroporphyrinogen decarboxylase.